A 107-amino-acid chain; its full sequence is uncharacterized protein (107 aa).

This is an uncharacterized protein from Escherichia coli (strain K12).